We begin with the raw amino-acid sequence, 44 residues long: Pandinin-1 (44 aa).

Expressed by the venom gland.

It localises to the secreted. Its subcellular location is the target cell membrane. Functionally, disrupts cell membranes through formation of pores. Strong antimicrobial activity against Gram-positive bacteria B.subtilis, S.epidermidis, E.faecalis and S.aureus. Less active against Gram-negative bacteria P.aeruginosa and E.coli. Has no antifungal or hemolytic activity. This is Pandinin-1 from Pandinus imperator (Emperor scorpion).